Consider the following 450-residue polypeptide: Crh-like protein 4 (450 aa).

Positions 1-21 (MRLSLVGVAIGLLSSSAIVTA) are cleaved as a signal peptide. A disulfide bridge connects residues C27 and C34. The 183-residue stretch at 46 to 228 (YDFTKGSSPD…WAGGETDYSA (183 aa)) folds into the GH16 domain. The Nucleophile role is filled by E119. The active-site Proton donor is E123. 4 residues coordinate chitin: E123, K201, W205, and T216. N383 is a glycosylation site (N-linked (GlcNAc...) asparagine).

The protein belongs to the glycosyl hydrolase 16 family. CRH1 subfamily. Post-translationally, the GPI-like anchor contains a phosphoceramide lipid group. The anchor position has not been determined.

It localises to the cell membrane. Its subcellular location is the secreted. The protein resides in the cell wall. It catalyses the reaction Random endo-hydrolysis of N-acetyl-beta-D-glucosaminide (1-&gt;4)-beta-linkages in chitin and chitodextrins.. Dual chitinase/transglycosylase that plays a role in cell wall architecture. Chitinase and transglycosylase activities are coupled. Required for the polysaccharide cross-linking at the septa and the cell wall. More specifically, transfers chitin to 1,6-beta-glucan in the cell wall. In Aspergillus fumigatus (strain ATCC MYA-4609 / CBS 101355 / FGSC A1100 / Af293) (Neosartorya fumigata), this protein is Crh-like protein 4.